Consider the following 55-residue polypeptide: Large ribosomal subunit protein bL33 (55 aa).

The protein belongs to the bacterial ribosomal protein bL33 family.

In Azorhizobium caulinodans (strain ATCC 43989 / DSM 5975 / JCM 20966 / LMG 6465 / NBRC 14845 / NCIMB 13405 / ORS 571), this protein is Large ribosomal subunit protein bL33.